The following is a 296-amino-acid chain: UPF0761 membrane protein YE0031 (296 aa).

Transmembrane regions (helical) follow at residues 44–64 (LLSL…FPMF), 67–87 (ISIK…GDII), 108–128 (GLIV…NIIW), 136–156 (LVFS…LVGA), 185–205 (LFPL…VPTV), 212–232 (ALIG…GFTM), and 246–266 (VLAV…IVLL).

This sequence belongs to the UPF0761 family.

It is found in the cell inner membrane. The polypeptide is UPF0761 membrane protein YE0031 (Yersinia enterocolitica serotype O:8 / biotype 1B (strain NCTC 13174 / 8081)).